Consider the following 156-residue polypeptide: Small ribosomal subunit protein uS7 (156 aa).

The protein belongs to the universal ribosomal protein uS7 family. In terms of assembly, part of the 30S ribosomal subunit. Contacts proteins S9 and S11.

One of the primary rRNA binding proteins, it binds directly to 16S rRNA where it nucleates assembly of the head domain of the 30S subunit. Is located at the subunit interface close to the decoding center, probably blocks exit of the E-site tRNA. The polypeptide is Small ribosomal subunit protein uS7 (Clostridium tetani (strain Massachusetts / E88)).